The following is a 197-amino-acid chain: Recombination protein RecR (197 aa).

A C4-type zinc finger spans residues 56–71 (CSRCFNLSAEDPCDIC). Residues 79–174 (ETICVVAEPR…RVTRIAFGLP (96 aa)) enclose the Toprim domain.

Belongs to the RecR family.

May play a role in DNA repair. It seems to be involved in an RecBC-independent recombinational process of DNA repair. It may act with RecF and RecO. This Gloeobacter violaceus (strain ATCC 29082 / PCC 7421) protein is Recombination protein RecR.